A 103-amino-acid polypeptide reads, in one-letter code: Small ribosomal subunit protein uS10 (103 aa).

The protein belongs to the universal ribosomal protein uS10 family. Part of the 30S ribosomal subunit.

In terms of biological role, involved in the binding of tRNA to the ribosomes. The sequence is that of Small ribosomal subunit protein uS10 from Xanthomonas axonopodis pv. citri (strain 306).